The sequence spans 487 residues: 3-octaprenyl-4-hydroxybenzoate carboxy-lyase (487 aa).

A Mn(2+)-binding site is contributed by asparagine 172. Prenylated FMN contacts are provided by residues 175–177 (IYR), 189–191 (RWL), and 194–195 (RG). Glutamate 238 is a Mn(2+) binding site. The active-site Proton donor is the aspartate 287.

It belongs to the UbiD family. As to quaternary structure, homohexamer. It depends on prenylated FMN as a cofactor. Mn(2+) serves as cofactor.

The protein localises to the cell membrane. The catalysed reaction is a 4-hydroxy-3-(all-trans-polyprenyl)benzoate + H(+) = a 2-(all-trans-polyprenyl)phenol + CO2. It functions in the pathway cofactor biosynthesis; ubiquinone biosynthesis. In terms of biological role, catalyzes the decarboxylation of 3-octaprenyl-4-hydroxy benzoate to 2-octaprenylphenol, an intermediate step in ubiquinone biosynthesis. The polypeptide is 3-octaprenyl-4-hydroxybenzoate carboxy-lyase (Actinobacillus pleuropneumoniae serotype 7 (strain AP76)).